The sequence spans 105 residues: Large ribosomal subunit protein uL24 (105 aa).

Belongs to the universal ribosomal protein uL24 family. As to quaternary structure, part of the 50S ribosomal subunit.

In terms of biological role, one of two assembly initiator proteins, it binds directly to the 5'-end of the 23S rRNA, where it nucleates assembly of the 50S subunit. One of the proteins that surrounds the polypeptide exit tunnel on the outside of the subunit. In Xanthomonas oryzae pv. oryzae (strain PXO99A), this protein is Large ribosomal subunit protein uL24.